The following is a 110-amino-acid chain: MALWMRLLPLLALLALWGPDPVPAFVNQHLCGSHLVEALYLVCGERGFFYTPKTRREAEDPQVGQVELGGGPGAGSLQPLALEGSLQKRGIVEQCCTSICSLYQLENYCN.

The N-terminal stretch at 1 to 24 is a signal peptide; the sequence is MALWMRLLPLLALLALWGPDPVPA. 3 disulfide bridges follow: C31-C96, C43-C109, and C95-C100. A propeptide spans 57–87 (c peptide); it reads EAEDPQVGQVELGGGPGAGSLQPLALEGSLQ.

It belongs to the insulin family. As to quaternary structure, heterodimer of a B chain and an A chain linked by two disulfide bonds.

Its subcellular location is the secreted. In terms of biological role, insulin decreases blood glucose concentration. It increases cell permeability to monosaccharides, amino acids and fatty acids. It accelerates glycolysis, the pentose phosphate cycle, and glycogen synthesis in liver. The chain is Insulin (INS) from Chlorocebus aethiops (Green monkey).